A 917-amino-acid polypeptide reads, in one-letter code: Lipoxygenase 6, chloroplastic (917 aa).

A chloroplast-targeting transit peptide spans 1–40; that stretch reads MFVASPVKTNFNGVSLVKSPAFSALSCRKQHRVPISRQVR. Residues 46-57 are compositionally biased toward basic and acidic residues; that stretch reads EEKAVDQEDGKK. The segment at 46–66 is disordered; that stretch reads EEKAVDQEDGKKSTNKPLINS. The PLAT domain occupies 98–216; sequence ERFEHQLELF…DNPQARIIFR (119 aa). Residues 219 to 917 form the Lipoxygenase domain; it reads PCLPSETPDG…GRGIPNSISI (699 aa). Fe cation-binding residues include H575, H580, H767, and N771. The tract at residues 880–904 is disordered; that stretch reads KDKKLKNRTGAGMPPYELLLPTSPH. A Fe cation-binding site is contributed by I917.

This sequence belongs to the lipoxygenase family. It depends on Fe cation as a cofactor.

It localises to the plastid. Its subcellular location is the chloroplast. The catalysed reaction is (9Z,12Z)-octadecadienoate + O2 = (13S)-hydroperoxy-(9Z,11E)-octadecadienoate. It carries out the reaction (9Z,12Z,15Z)-octadecatrienoate + O2 = (13S)-hydroperoxy-(9Z,11E,15Z)-octadecatrienoate. It participates in lipid metabolism; oxylipin biosynthesis. In terms of biological role, plant lipoxygenases may be involved in a number of diverse aspects of plant physiology including growth and development, pest resistance, and senescence or responses to wounding. Catalyzes the hydroperoxidation of lipids containing a cis,cis-1,4-pentadiene structure. 13S-lipoxygenase that can use linolenic acid as substrates. The sequence is that of Lipoxygenase 6, chloroplastic from Arabidopsis thaliana (Mouse-ear cress).